The primary structure comprises 272 residues: 3-methyl-2-oxobutanoate hydroxymethyltransferase (272 aa).

The Mg(2+) site is built by Asp-43 and Asp-82. 3-methyl-2-oxobutanoate contacts are provided by residues 43–44, Asp-82, and Lys-112; that span reads DS. Glu-114 lines the Mg(2+) pocket. Glu-179 acts as the Proton acceptor in catalysis.

The protein belongs to the PanB family. Homodecamer; pentamer of dimers. Requires Mg(2+) as cofactor.

The protein resides in the cytoplasm. It carries out the reaction 3-methyl-2-oxobutanoate + (6R)-5,10-methylene-5,6,7,8-tetrahydrofolate + H2O = 2-dehydropantoate + (6S)-5,6,7,8-tetrahydrofolate. It functions in the pathway cofactor biosynthesis; (R)-pantothenate biosynthesis; (R)-pantoate from 3-methyl-2-oxobutanoate: step 1/2. Its function is as follows. Catalyzes the reversible reaction in which hydroxymethyl group from 5,10-methylenetetrahydrofolate is transferred onto alpha-ketoisovalerate to form ketopantoate. The protein is 3-methyl-2-oxobutanoate hydroxymethyltransferase of Staphylococcus aureus (strain bovine RF122 / ET3-1).